The following is a 275-amino-acid chain: Dermonecrotic toxin SpeSicTox-betaIIA3ii (275 aa).

His5 is a catalytic residue. Mg(2+) contacts are provided by Glu25 and Asp27. The active-site Nucleophile is His41. 2 cysteine pairs are disulfide-bonded: Cys45-Cys51 and Cys47-Cys190. Residue Asp85 coordinates Mg(2+).

Belongs to the arthropod phospholipase D family. Class II subfamily. Requires Mg(2+) as cofactor. As to expression, expressed by the venom gland.

The protein localises to the secreted. The enzyme catalyses an N-(acyl)-sphingosylphosphocholine = an N-(acyl)-sphingosyl-1,3-cyclic phosphate + choline. The catalysed reaction is an N-(acyl)-sphingosylphosphoethanolamine = an N-(acyl)-sphingosyl-1,3-cyclic phosphate + ethanolamine. It catalyses the reaction a 1-acyl-sn-glycero-3-phosphocholine = a 1-acyl-sn-glycero-2,3-cyclic phosphate + choline. It carries out the reaction a 1-acyl-sn-glycero-3-phosphoethanolamine = a 1-acyl-sn-glycero-2,3-cyclic phosphate + ethanolamine. Its function is as follows. Dermonecrotic toxins cleave the phosphodiester linkage between the phosphate and headgroup of certain phospholipids (sphingolipid and lysolipid substrates), forming an alcohol (often choline) and a cyclic phosphate. This toxin acts on sphingomyelin (SM). It may also act on ceramide phosphoethanolamine (CPE), lysophosphatidylcholine (LPC) and lysophosphatidylethanolamine (LPE), but not on lysophosphatidylserine (LPS), and lysophosphatidylglycerol (LPG). It acts by transphosphatidylation, releasing exclusively cyclic phosphate products as second products. Induces dermonecrosis, hemolysis, increased vascular permeability, edema, inflammatory response, and platelet aggregation. This is Dermonecrotic toxin SpeSicTox-betaIIA3ii from Sicarius peruensis (Six-eyed sand spider).